Consider the following 84-residue polypeptide: RNA-binding protein Hfq (84 aa).

Positions 10–70 (DNVLNQVRKN…VSTIIPGKTL (61 aa)) constitute a Sm domain.

The protein belongs to the Hfq family. In terms of assembly, homohexamer.

In terms of biological role, RNA chaperone that binds small regulatory RNA (sRNAs) and mRNAs to facilitate mRNA translational regulation in response to envelope stress, environmental stress and changes in metabolite concentrations. Also binds with high specificity to tRNAs. This Natranaerobius thermophilus (strain ATCC BAA-1301 / DSM 18059 / JW/NM-WN-LF) protein is RNA-binding protein Hfq.